Consider the following 327-residue polypeptide: Ribose-phosphate pyrophosphokinase (327 aa).

Residue Asp-51–Glu-53 coordinates ATP. The Mg(2+) site is built by His-144 and Asp-183. Lys-207 is a catalytic residue. D-ribose 5-phosphate contacts are provided by residues Arg-209, Asp-233, and Asp-237–Thr-241.

The protein belongs to the ribose-phosphate pyrophosphokinase family. Class I subfamily. Homohexamer. It depends on Mg(2+) as a cofactor.

It is found in the cytoplasm. It catalyses the reaction D-ribose 5-phosphate + ATP = 5-phospho-alpha-D-ribose 1-diphosphate + AMP + H(+). Its pathway is metabolic intermediate biosynthesis; 5-phospho-alpha-D-ribose 1-diphosphate biosynthesis; 5-phospho-alpha-D-ribose 1-diphosphate from D-ribose 5-phosphate (route I): step 1/1. In terms of biological role, involved in the biosynthesis of the central metabolite phospho-alpha-D-ribosyl-1-pyrophosphate (PRPP) via the transfer of pyrophosphoryl group from ATP to 1-hydroxyl of ribose-5-phosphate (Rib-5-P). The chain is Ribose-phosphate pyrophosphokinase from Prochlorococcus marinus (strain SARG / CCMP1375 / SS120).